Here is a 197-residue protein sequence, read N- to C-terminus: Recombination protein RecR (197 aa).

The segment at 56–71 (CQQCRNLSETEICGFC) adopts a C4-type zinc-finger fold. The Toprim domain occupies 79 to 174 (DQLCIVETPT…SVTRLAQGIP (96 aa)).

Belongs to the RecR family.

Its function is as follows. May play a role in DNA repair. It seems to be involved in an RecBC-independent recombinational process of DNA repair. It may act with RecF and RecO. The sequence is that of Recombination protein RecR from Hydrogenovibrio crunogenus (strain DSM 25203 / XCL-2) (Thiomicrospira crunogena).